A 202-amino-acid chain; its full sequence is NADH-quinone oxidoreductase subunit B (202 aa).

Polar residues predominate over residues 1–13 (MSSPTTKFSNAAS). Residues 1 to 32 (MSSPTTKFSNAASSAGGPRVTPAAASILDPRT) form a disordered region. C81, C82, C146, and C176 together coordinate [4Fe-4S] cluster.

It belongs to the complex I 20 kDa subunit family. In terms of assembly, NDH-1 is composed of 14 different subunits. Subunits NuoB, C, D, E, F, and G constitute the peripheral sector of the complex. The cofactor is [4Fe-4S] cluster.

Its subcellular location is the cell inner membrane. It carries out the reaction a quinone + NADH + 5 H(+)(in) = a quinol + NAD(+) + 4 H(+)(out). Its function is as follows. NDH-1 shuttles electrons from NADH, via FMN and iron-sulfur (Fe-S) centers, to quinones in the respiratory chain. The immediate electron acceptor for the enzyme in this species is believed to be ubiquinone. Couples the redox reaction to proton translocation (for every two electrons transferred, four hydrogen ions are translocated across the cytoplasmic membrane), and thus conserves the redox energy in a proton gradient. The protein is NADH-quinone oxidoreductase subunit B of Nitrobacter hamburgensis (strain DSM 10229 / NCIMB 13809 / X14).